Consider the following 542-residue polypeptide: Putative CTP synthase (542 aa).

The tract at residues 1–277 is amidoligase domain; it reads MEIDLMKHIQ…HKTILDFFSL (277 aa). CTP is bound at residue Ser-23. Ser-23 is a UTP binding site. ATP contacts are provided by residues 24 to 29 and Asp-81; that span reads SLGKGV. Residues Asp-81 and Glu-151 each coordinate Mg(2+). CTP-binding positions include 158 to 160, 198 to 203, and Lys-234; these read DIE and KTKPTQ. UTP is bound by residues 198–203 and Lys-234; that span reads KTKPTQ. One can recognise a Glutamine amidotransferase type-1 domain in the interval 310-542; that stretch reads YVELPDAYKS…LKMSLKIKES (233 aa). Glu-517 is an active-site residue.

The protein belongs to the CTP synthase family. In terms of assembly, homotetramer.

It carries out the reaction UTP + L-glutamine + ATP + H2O = CTP + L-glutamate + ADP + phosphate + 2 H(+). The enzyme catalyses L-glutamine + H2O = L-glutamate + NH4(+). It catalyses the reaction UTP + NH4(+) + ATP = CTP + ADP + phosphate + 2 H(+). The protein operates within pyrimidine metabolism; CTP biosynthesis via de novo pathway; CTP from UDP: step 2/2. With respect to regulation, allosterically activated by GTP, when glutamine is the substrate; GTP has no effect on the reaction when ammonia is the substrate. The allosteric effector GTP functions by stabilizing the protein conformation that binds the tetrahedral intermediate(s) formed during glutamine hydrolysis. Inhibited by the product CTP, via allosteric rather than competitive inhibition. Functionally, catalyzes the ATP-dependent amination of UTP to CTP with either L-glutamine or ammonia as the source of nitrogen. Regulates intracellular CTP levels through interactions with the four ribonucleotide triphosphates. This chain is Putative CTP synthase, found in Ureaplasma parvum serovar 3 (strain ATCC 700970).